We begin with the raw amino-acid sequence, 594 residues long: MNKLYIGNLSENVSPTDLESLFKESKIPFTGQFLVKSGYAFVDCPDETWAMKAIDTLSGKVELHGKVIEVEHSVPKRQRSRKLQIRNIPPHLQWEVLDSLLAQYGTVENCEQVNTESETAVVNVTYANKEHARQGLEKLNGYQLENYSLKVTYIPDEMATPQAPSQQLQQQPQQQHPQGRRGFGQRGPARQGSPGAAARPKPQTEVPLRMLVPTQFVGAIIGKEGATIRNITKQTQSKIDIHRKENAGAAEKPITIHSTPEGCSAACKIIMEIMQKEAQDTKFTEEIPLKILAHNNFVGRLIGKEGRNLKKIEQDTDTKITISPLQDLTLYNPERTITVKGSIEPCAKAEEEIMKKIRESYENDIAAMNLQAHLIPGLNLNALGLFPSSSSGMPPPSVGVPSPTSSTSYPPFGQQPESETVHLFIPALAVGAIIGKQGQHIKQLSRFAGASIKIAPAEGPDAKLRMVIITGPPEAQFKAQGRIYGKLKEENFFGPKEEVKLETHIKVPSYAAGRVIGKGGKTVNELQNLTSAEVVVPRDQTPDENDEVVVKITGHFYASQLAQRKIQEILAQVRRQQQQQQKTVQSGQPQPRRK.

RRM domains follow at residues 2-75 and 81-156; these read NKLY…HSVP and RKLQ…YIPD. Over residues 161-177 the composition is skewed to low complexity; that stretch reads PQAPSQQLQQQPQQQHP. A disordered region spans residues 161 to 206; that stretch reads PQAPSQQLQQQPQQQHPQGRRGFGQRGPARQGSPGAAARPKPQTEV. 2 KH domains span residues 205–270 and 286–353; these read EVPL…CKII and EIPL…EEEI. The interval 392-415 is disordered; sequence GMPPPSVGVPSPTSSTSYPPFGQQ. Positions 399–411 are enriched in low complexity; that stretch reads GVPSPTSSTSYPP. KH domains lie at 418 to 483 and 500 to 566; these read SETV…QGRI and KLET…QRKI.

It belongs to the RRM IMP/VICKZ family. As to quaternary structure, homodimer and multimer. Associates with microtubules. Interaction with a translocation machinery protein TRAPA of the endoplasmic reticulum. Component of a mRNP complex, at least composed of DAZAP1, IGF2BP3, STAU and VgRBP60. The mRNP complex with DAZAP1, IGF2BP3, STAU and VgRBP60 is only found in the cytoplasm. Interacts with a hnRNP 1 related RNA transport protein VgRBP60 both in the nucleus (in a RNA-independent manner) and the cytoplasm (in a RNA-dependent manner). Found in a B3 activator complex.

The protein resides in the nucleus. It localises to the cytoplasm. It is found in the endoplasmic reticulum. Functionally, RNA-binding protein that acts as a regulator of mRNA transport and localization. Binds to the RNA sequence motif 5'-UUCAC-3'. Preferentially binds to N6-methyladenosine (m6A)-containing mRNAs and increases their stability. Mediates the specific association of Vg1 RNA to microtubules. Binds specifically to the vegetal localization elements (VLE or VgLE) in the 3'-UTR of Vg1 and VegT mRNAs. Binds to the Vg1 and VegT mRNAs in both the nucleus and the cytoplasm. May regulate mRNA translation. Acts as a transcription regulator. Binds to the 5'-[TA]GGTTACT-3' motif within element 3 of the TFIIIA gene promoter. This Xenopus laevis (African clawed frog) protein is Insulin-like growth factor 2 mRNA-binding protein 3-A (igf2bp3-a).